We begin with the raw amino-acid sequence, 362 residues long: Innexin-17 (362 aa).

Transmembrane regions (helical) follow at residues Tyr27–Gly47, Trp101–Asn121, Phe189–Gly209, and Leu266–Phe286.

The protein belongs to the pannexin family.

The protein localises to the cell membrane. It is found in the cell junction. The protein resides in the gap junction. In terms of biological role, structural component of the gap junctions. The chain is Innexin-17 from Caenorhabditis elegans.